A 313-amino-acid chain; its full sequence is Pyrimidine-specific ribonucleoside hydrolase RihB (313 aa).

Catalysis depends on D11, which acts as the Proton acceptor. Residues D11, D16, and V124 each coordinate Ca(2+). 2 residues coordinate substrate: Q227 and H239. D240 provides a ligand contact to Ca(2+).

It belongs to the IUNH family. RihB subfamily. As to quaternary structure, homotetramer. Requires Ca(2+) as cofactor.

It carries out the reaction a pyrimidine ribonucleoside + H2O = a pyrimidine nucleobase + D-ribose. Hydrolyzes cytidine or uridine to ribose and cytosine or uracil, respectively. Has a clear preference for cytidine over uridine. Strictly specific for ribonucleosides. This Escherichia coli O17:K52:H18 (strain UMN026 / ExPEC) protein is Pyrimidine-specific ribonucleoside hydrolase RihB.